Consider the following 1058-residue polypeptide: MDPRTRLDYALFQLTPTRTRCDLVIFSGGENEKLASGIFQPFVTHLKSVSDQISKGGYSVTLRPSSVGVPWFTKVTLQRFVRFVTTPEVLERSVTLEKEIEQIEDSIQANAAAIAGEAEGNELGGTWTSQKSTALSKTKGETDGDTVEENSKVGLQRVLENRKAALCKEQAMAYARALVVGFELDYMDDLFSFADAFGASRLREACVNFVDLCKRKNEDRMWVDQITAMQAFPRPELTFMGDSGIVLAGEENDLLNATNVKHGNSMDASSQGSFETGQEGRAQMAMPWPNQFPQYMQNFQGHGYPPPYMFPGMQGQSPYFHGNMQWPVNMGDVESNEKSSKKKKKKKKNKKKSKQDESAEPSDNSSTETESEDGNEGKKQSRKVVIRNINYITSKRNGAKESDSDESGEEEGFVDGDSIKQQVEEAIGSVERRHKSTSHRQRKHKSHNGDDDSSNKETKGNDNWDAFQNLLLKDNDSEPEELLRISSTALNMASEVVRKREPPSDDSFLVAIGNEDWGRETSIEKFNAGENVRIIRKGNNYDEEMLNPGRSDESRSYSQAEMSVHDGKLRTRNEAEEDWFIRNQAGPETDPSLVKTFVGDHFHLNKSSERDVLTDDSFMIHSRVENQVEDSRLRTEIMDLDVYGTTQQENSAPENTPHEPDDLYMVLGREQDVKPTLLPWTPEIDFETNTLAQRTSRIDLITATKASAGEQTLDGKEKKSRGISKGKDAKSRASSRPDPASKAKRPAWGSRAAVSKSKSEMEEERKKRMEELLIQRQKRIAEKSSGGSVSSSLASKKTPTVTKSVKSSIKNEKTPEAAQSKAKPVLRSSTIERLAVARTAPKEPQQKPVIKRTSKPSGYKTEKAQEKKSSKIGQSDAKSVELSRDPSLEIKETVVEDSHSYLSEKQVDALPAVASVDDFKDIKELHSLPSEETARVKNRPNEIIAEKVQDQTKIDDQETVKNTSVSEDKQITTKHYSEDVGEVQASQEKPVSPKKSVTFSETNMEEKYYFSPAVSEIDISTPPATEADHSRKKWNSEETSPKATAKVFRKLLMFGRKK.

3 disordered regions span residues 123–147 (LGGT…GDTV), 262–281 (HGNS…QEGR), and 330–463 (MGDV…GNDN). Polar residues-rich tracts occupy residues 126-136 (TWTSQKSTALS) and 262-276 (HGNS…SFET). Residues 340–347 (SKKKKKKK) carry the Nuclear localization signal 1 motif. Residues 340–353 (SKKKKKKKKNKKKS) show a composition bias toward basic residues. Acidic residues predominate over residues 403–414 (DSDESGEEEGFV). A Nuclear localization signal 2 motif is present at residues 431 to 438 (ERRHKSTS). Basic residues predominate over residues 432 to 446 (RRHKSTSHRQRKHKS). Positions 447–462 (HNGDDDSSNKETKGND) are enriched in basic and acidic residues. Phosphoserine is present on Ser-477. Positions 708 to 887 (AGEQTLDGKE…KSVELSRDPS (180 aa)) are disordered. Residues 757-773 (SKSEMEEERKKRMEELL) are compositionally biased toward basic and acidic residues. Residues 764-771 (ERKKRMEE) carry the Nuclear localization signal 3 motif. The segment covering 783–808 (KSSGGSVSSSLASKKTPTVTKSVKSS) has biased composition (low complexity). Composition is skewed to basic and acidic residues over residues 860–869 (KTEKAQEKKS) and 878–887 (KSVELSRDPS). Phosphoserine is present on residues Ser-915, Ser-986, and Ser-992. The disordered stretch occupies residues 1020–1041 (STPPATEADHSRKKWNSEETSP). Over residues 1026–1040 (EADHSRKKWNSEETS) the composition is skewed to basic and acidic residues.

In terms of assembly, interacts with COP1.

The protein resides in the nucleus. Functionally, exhibits transcriptional activation activity. Positive regulator of light-regulated genes, probably being a direct downstream target of COP1 for mediating light control of gene expression. The sequence is that of COP1-interacting protein 7 from Arabidopsis thaliana (Mouse-ear cress).